A 303-amino-acid polypeptide reads, in one-letter code: tRNA pseudouridine synthase B (303 aa).

Residue Asp-46 is the Nucleophile of the active site.

This sequence belongs to the pseudouridine synthase TruB family. Type 1 subfamily.

It carries out the reaction uridine(55) in tRNA = pseudouridine(55) in tRNA. Functionally, responsible for synthesis of pseudouridine from uracil-55 in the psi GC loop of transfer RNAs. This is tRNA pseudouridine synthase B from Hydrogenovibrio crunogenus (strain DSM 25203 / XCL-2) (Thiomicrospira crunogena).